Consider the following 311-residue polypeptide: MFHHISVMLNETIDYLNVKENGVYIDCTLGGAGHALYLLNQLNDDGRLIAIDQDQTAIDNAKKVLKEHLHKVTFVHSNFRELTQILKDLNIEKVDGIYYDLGVSSPQLDIPERGFSYHHDATLDMRMDQTQELTAYEIVNNWSYEALVKIFYRYGEEKFSKQIARRIEAHREQQPITTTLELVDIIKEGIPAKARRKGGHPAKRVFQALRIAVNDELSAFEDSIEQAIELVKVDGRISVITFHSLEDRLCKQVFQEYEKGPEVPRGLPVIPEAYTPKLKRINRKPITATEEDLDDNNRARSAKLRVAEILK.

Residues 32–34, Asp52, Phe79, Asp100, and Gln107 each bind S-adenosyl-L-methionine; that span reads AGH.

This sequence belongs to the methyltransferase superfamily. RsmH family.

It is found in the cytoplasm. It carries out the reaction cytidine(1402) in 16S rRNA + S-adenosyl-L-methionine = N(4)-methylcytidine(1402) in 16S rRNA + S-adenosyl-L-homocysteine + H(+). Specifically methylates the N4 position of cytidine in position 1402 (C1402) of 16S rRNA. The polypeptide is Ribosomal RNA small subunit methyltransferase H (Staphylococcus aureus (strain bovine RF122 / ET3-1)).